A 611-amino-acid chain; its full sequence is Probable potassium transport system protein Kup 1 (611 aa).

12 helical membrane-spanning segments follow: residues 6–26 (LMVG…LYTM), 44–64 (MLSL…VAVV), 90–110 (LGVI…GAIT), 129–149 (ISPY…ALQA), 158–178 (LFGP…LFGI), 193–213 (GLSY…AVFL), 237–257 (WYGL…AVVV), 280–300 (LVAL…SGAF), 328–348 (IYIG…TLGF), 354–374 (LAAA…ILMF), 385–405 (LAAS…FVSA), and 410–430 (VLEG…LMMT).

Belongs to the HAK/KUP transporter (TC 2.A.72) family.

It localises to the cell inner membrane. The enzyme catalyses K(+)(in) + H(+)(in) = K(+)(out) + H(+)(out). In terms of biological role, transport of potassium into the cell. Likely operates as a K(+):H(+) symporter. This Bradyrhizobium sp. (strain BTAi1 / ATCC BAA-1182) protein is Probable potassium transport system protein Kup 1.